The following is a 444-amino-acid chain: Spermatogenesis-associated protein 1 (444 aa).

Residues 268–403 (SLLKIEREKI…RKLDTDKMKL (136 aa)) adopt a coiled-coil conformation.

In terms of assembly, interacts with IFT20. Highly abundant in the testis, and is also expressed in the heart and kidney (at protein level).

It is found in the cytoplasmic vesicle. The protein localises to the secretory vesicle. Its subcellular location is the acrosome. This is Spermatogenesis-associated protein 1 (Spata1) from Mus musculus (Mouse).